The following is an 880-amino-acid chain: Protein translocase subunit SecA (880 aa).

ATP is bound by residues Gln-86, 104–108 (GEGKT), and Asp-511. The disordered stretch occupies residues 837–871 (AQKIQRSDGDGARRPVEKPKKIGRNDPCPCGSGKK). Basic and acidic residues predominate over residues 841–860 (QRSDGDGARRPVEKPKKIGR). Cys-864, Cys-866, Cys-875, and Cys-876 together coordinate Zn(2+).

Belongs to the SecA family. As to quaternary structure, monomer and homodimer. Part of the essential Sec protein translocation apparatus which comprises SecA, SecYEG and auxiliary proteins SecDF. Other proteins may also be involved. Zn(2+) is required as a cofactor.

Its subcellular location is the cell inner membrane. It is found in the cytoplasm. It carries out the reaction ATP + H2O + cellular proteinSide 1 = ADP + phosphate + cellular proteinSide 2.. Part of the Sec protein translocase complex. Interacts with the SecYEG preprotein conducting channel. Has a central role in coupling the hydrolysis of ATP to the transfer of proteins into and across the cell membrane, serving as an ATP-driven molecular motor driving the stepwise translocation of polypeptide chains across the membrane. The protein is Protein translocase subunit SecA of Thermodesulfovibrio yellowstonii (strain ATCC 51303 / DSM 11347 / YP87).